The sequence spans 398 residues: L-methionine gamma-lyase (398 aa).

Residues Tyr59–Arg61 and Gly89–Met90 contribute to the pyridoxal 5'-phosphate site. Tyr114 provides a ligand contact to substrate. Pyridoxal 5'-phosphate is bound at residue Ser208–Thr210. The residue at position 211 (Lys211) is an N6-(pyridoxal phosphate)lysine. Arg375 lines the substrate pocket.

This sequence belongs to the trans-sulfuration enzymes family. L-methionine gamma-lyase subfamily. In terms of assembly, homotetramer; dimer of active dimers. It depends on pyridoxal 5'-phosphate as a cofactor.

It catalyses the reaction L-methionine + H2O = methanethiol + 2-oxobutanoate + NH4(+). The catalysed reaction is L-homocysteine + H2O = 2-oxobutanoate + hydrogen sulfide + NH4(+) + H(+). With respect to regulation, irreversibly inactivated by DL-propargylglycine. In terms of biological role, catalyzes the alpha,gamma-elimination of L-methionine to produce methanethiol, 2-oxobutanoate and ammonia. Is involved in L-methionine catabolism. In fact, shows a multicatalytic function since it also catalyzes gamma-replacement of L-methionine with thiol compounds, alpha,gamma-elimination and gamma-replacement reactions of L-homocysteine and its S-substituted derivatives, O-substituted-L-homoserines and DL-selenomethionine, and, to a lesser extent, alpha,beta-elimination and beta-replacement reactions of L-cysteine, S-methyl-L-cysteine, and O-acetyl-L-serine. Also catalyzes deamination and gamma-addition reactions of L-vinylglycine. Thus, the enzyme is able to cleave C-S, C-Se, and C-O bonds of sulfur, selenium, and oxygen amino acids, respectively. This Pseudomonas putida (Arthrobacter siderocapsulatus) protein is L-methionine gamma-lyase.